A 427-amino-acid polypeptide reads, in one-letter code: MKIALIHYRGGLMDGVSLEMEKWKKVLTKMGHEVHIVAENKKEGVDLTLKEIGFENPDFERVNRNFFGGIKDFLSEKEFLDFLKEKEEELFHILNEALKDYDLIVPNNIWSLGLFPSLGLALSRLEKNFVAHHHDFWWERKHLIPENRRFREILDKHFPPDLPNVKHVVINTIAQRELKRRRNIDSVVVPNVMDFSSPITSEEMYHRVREELQIAPGTIVALQATRIDRRKTIELSIDVVSLLKETLTSKKEADLYNGERYSGEVILLFSGICEDEEYLKELKEYASSKGVSLLVLSEEVRKNTSLFWKLYNAADFVTYPSILEGWGNQLLEAIAAKKPVVLFEYEVFKSDIKPAGLKYVSLGDRCFRENGLVKVDERILKKAVEEISRLLFDPSLYRETVEHNFEVGKRHFSLERLEDILSREVLP.

The protein belongs to the glycosyltransferase group 1 family. Co(2+) is required as a cofactor. It depends on Mg(2+) as a cofactor. Requires Mn(2+) as cofactor. Ni(2+) serves as cofactor.

The enzyme catalyses (2R)-2-O-(alpha-D-glucopyranosyl)-glycerate + GDP-alpha-D-mannose = (2R)-2-O-[alpha-D-mannopyranosyl-(1-&gt;2)-alpha-D-glucopyranosyl]-glycerate + GDP + H(+). Catalyzes the synthesis of mannosylglucosylglycerate (MGG) from glucosylglycerate (GG) and GDP-mannose. This Thermotoga maritima (strain ATCC 43589 / DSM 3109 / JCM 10099 / NBRC 100826 / MSB8) protein is Mannosylglucosylglycerate synthase.